The following is a 409-amino-acid chain: Terpredoxin reductase (409 aa).

7 to 38 (TTVIVGAGHAGTAAAFFLREFGYHGRVLLLSA) is a binding site for FAD. An NAD(+)-binding site is contributed by 151-159 (GGGFIGLEI).

FAD is required as a cofactor.

Functionally, the oxidation of alpha-terpineol by cytochrome p450-TERP requires the participation of a flavoprotein, terpredoxin reductase, and an iron-sulfur protein, terpredoxin, to mediate the transfer of electrons from NADH to P450 for oxygen activation. This chain is Terpredoxin reductase (terPA), found in Pseudomonas sp.